The primary structure comprises 219 residues: Protein-L-isoaspartate O-methyltransferase (219 aa).

S64 is a catalytic residue.

It belongs to the methyltransferase superfamily. L-isoaspartyl/D-aspartyl protein methyltransferase family.

Its subcellular location is the cytoplasm. The catalysed reaction is [protein]-L-isoaspartate + S-adenosyl-L-methionine = [protein]-L-isoaspartate alpha-methyl ester + S-adenosyl-L-homocysteine. Its function is as follows. Catalyzes the methyl esterification of L-isoaspartyl residues in peptides and proteins that result from spontaneous decomposition of normal L-aspartyl and L-asparaginyl residues. It plays a role in the repair and/or degradation of damaged proteins. This chain is Protein-L-isoaspartate O-methyltransferase, found in Chlorobaculum parvum (strain DSM 263 / NCIMB 8327) (Chlorobium vibrioforme subsp. thiosulfatophilum).